The sequence spans 713 residues: Ribosomal RNA large subunit methyltransferase K/L (713 aa).

The THUMP domain maps to 43–154; that stretch reads LLYRALLWSR…RDQVMLSLDL (112 aa).

The protein belongs to the methyltransferase superfamily. RlmKL family.

It is found in the cytoplasm. It catalyses the reaction guanosine(2445) in 23S rRNA + S-adenosyl-L-methionine = N(2)-methylguanosine(2445) in 23S rRNA + S-adenosyl-L-homocysteine + H(+). It carries out the reaction guanosine(2069) in 23S rRNA + S-adenosyl-L-methionine = N(2)-methylguanosine(2069) in 23S rRNA + S-adenosyl-L-homocysteine + H(+). In terms of biological role, specifically methylates the guanine in position 2445 (m2G2445) and the guanine in position 2069 (m7G2069) of 23S rRNA. This Sodalis glossinidius (strain morsitans) protein is Ribosomal RNA large subunit methyltransferase K/L.